Consider the following 397-residue polypeptide: Bifunctional arginine demethylase and lysyl-hydroxylase psr-1 (397 aa).

The JmjC domain maps to 146–310 (RKTKKLSEDY…LVWPKTVRGR (165 aa)). Thr-189 lines the substrate pocket. Fe cation is bound by residues His-192 and Asp-194. Asn-202 contacts 2-oxoglutarate. Residue Lys-209 coordinates substrate. His-278 is a binding site for Fe cation. Thr-290 contributes to the 2-oxoglutarate binding site. Residues 334–344 (SCTDTPPQSLN) show a composition bias toward polar residues. The disordered stretch occupies residues 334-383 (SCTDTPPQSLNDSSSDSSSSSSSSDDSSDSETEEDSGRCGLGNRKRRNDV). Residues 345-358 (DSSSDSSSSSSSSD) are compositionally biased toward low complexity.

This sequence belongs to the JMJD6 family. As to quaternary structure, interacts with ced-5 and ced-12. The cofactor is Fe(2+).

It is found in the nucleus. Functionally, dioxygenase that can both act as a histone arginine demethylase and a lysyl-hydroxylase. The polypeptide is Bifunctional arginine demethylase and lysyl-hydroxylase psr-1 (psr-1) (Caenorhabditis briggsae).